The primary structure comprises 1331 residues: uncharacterized protein (1331 aa).

The next 8 helical transmembrane spans lie at 373–393 (VIGV…SLIV), 487–507 (ALFL…LILI), 534–554 (LLIF…SFGI), 579–599 (VVGL…ISLL), 653–673 (LVFL…SFAT), 1206–1226 (VIAV…TTLI), 1255–1275 (IPLF…LIAL), and 1297–1317 (AIGS…LNWL).

It belongs to the ABC-4 integral membrane protein family.

Its subcellular location is the cell membrane. This is an uncharacterized protein from Mycoplasma genitalium (strain ATCC 33530 / DSM 19775 / NCTC 10195 / G37) (Mycoplasmoides genitalium).